The following is a 426-amino-acid chain: MASKEMFEDTVEERVINEEYKIWKKNTPFLYDLVMTHALQWPSLTVQWLPEVTKPEGKDYALHWLVLGTHTSDEQNHLVVARVHIPNDDAQFDASHCDSDKGEFGGFGSVTGKIECEIKINHEGEVNRARYMPQNPHIIATKTPSSGVLVFDYTKHPAKPDPSGECNPDLRLRGHQKEGYGLSWNSNLSGHLLSASDDHTVCLWDINAGPKEGKIVDAKAVFTGHSAVVEDVAWHLLHESLFGSVADDQKLMMWDTRSNTTSKPSHLVDAHTAEVNCLSFNPYSEFILATGSADKTVALWDLRNLKLKLHTFESHKDEIFQVVHWSPHNETILASSGTDRRLNVWDLSKIGEEQSAEDAEDGPPELLFIHGGHTAKISDFSWNPNEPWVICSVSEDNIMQIWQMAENIYNDEESDVTTSELEGQGS.

At Ala2 the chain carries N-acetylalanine. Ser3 is subject to Phosphoserine. Position 4 is an N6-acetyllysine; alternate (Lys4). A Glycyl lysine isopeptide (Lys-Gly) (interchain with G-Cter in SUMO2); alternate cross-link involves residue Lys4. A Glycyl lysine isopeptide (Lys-Gly) (interchain with G-Cter in ubiquitin); alternate cross-link involves residue Lys4. Thr10 is modified (phosphothreonine). WD repeat units lie at residues Gln47–His122, Arg128–Arg173, Gly181–Asp217, Val228–Asp269, Val275–Phe312, Glu318–His370, and Ile377–Met404. Position 95 is a phosphoserine (Ser95). Residue Lys101 forms a Glycyl lysine isopeptide (Lys-Gly) (interchain with G-Cter in SUMO2) linkage. Residue Lys119 is modified to N6-acetyllysine. Lys155 participates in a covalent cross-link: Glycyl lysine isopeptide (Lys-Gly) (interchain with G-Cter in SUMO2). Lys159 is modified (N6-acetyllysine; alternate). Residue Lys159 forms a Glycyl lysine isopeptide (Lys-Gly) (interchain with G-Cter in SUMO2); alternate linkage. At Ser355 the chain carries Phosphoserine.

It belongs to the WD repeat RBAP46/RBAP48/MSI1 family. Binds directly to helix 1 of the histone fold of histone H4, a region that is not accessible when H4 is in chromatin. Subunit of the type B histone acetyltransferase (HAT) complex, composed of RBBP7 and HAT1. Subunit of the core histone deacetylase (HDAC) complex, which is composed of HDAC1, HDAC2, RBBP4 and RBBP7. The core HDAC complex associates with SIN3A, ARID4B/SAP180, SAP18, SAP30, SAP130, SUDS3/SAP45 and possibly ARID4A/RBP1 and ING1 to form the SIN3 HDAC complex. Component of the nucleosome remodeling and deacetylase (NuRD) repressor complex, composed of core proteins MTA1, MTA2, MTA3, RBBP4, RBBP7, HDAC1, HDAC2, MBD2, MBD3, and peripherally associated proteins CDK2AP1, CDK2AP2, GATAD2A, GATAD2B, CHD3, CHD4 and CHD5. The exact stoichiometry of the NuRD complex is unknown, and some subunits such as MBD2 and MBD3, GATAD2A and GATAD2B, and CHD3, CHD4 and CHD5 define mutually exclusive NuRD complexes. The NuRD complex may interact with MBD3L1. The NuRD complex may interact with MBD3L2. Subunit of the PRC2/EED-EZH2 complex, which is composed of at least EED, EZH2, RBBP4, RBBP7 and SUZ12. The PRC2/EED-EZH2 complex may also associate with HDAC1. Component of the NURF-1 ISWI chromatin remodeling complex (also called the nucleosome-remodeling factor (NURF) complex) at least composed of SMARCA1, BPTF, RBBP4 and RBBP7. Within the complex interacts with SMARCA1. Component of the BPFT-SMARCA1 complex at least composed of SMARCA1, BPFT, RBBP4 and RBBP7; the complex is catalytically inactive and does not remodel chromatin. Within the complex interacts with SMARCA1. Interacts with BRCA1. Interacts with CDK2AP1. Interacts with CENPA. Interacts with CHD3. Interacts with CHD4. Interacts with CREBBP, and this interaction may be enhanced by the binding of phosphorylated CREB1 to CREBBP. Interacts with HDAC7. Interacts with MTA1. Interacts with PWWP2B. Interacts with RB1 (via viral protein-binding domain). Interacts with SUV39H1.

It localises to the nucleus. Functionally, core histone-binding subunit that may target chromatin remodeling factors, histone acetyltransferases and histone deacetylases to their histone substrates in a manner that is regulated by nucleosomal DNA. Component of several complexes which regulate chromatin metabolism. These include the type B histone acetyltransferase (HAT) complex, which is required for chromatin assembly following DNA replication; the core histone deacetylase (HDAC) complex, which promotes histone deacetylation and consequent transcriptional repression; the nucleosome remodeling and histone deacetylase complex (the NuRD complex), which promotes transcriptional repression by histone deacetylation and nucleosome remodeling; and the PRC2/EED-EZH2 complex, which promotes repression of homeotic genes during development; and the NURF (nucleosome remodeling factor) complex. The protein is Histone-binding protein RBBP7 (RBBP7) of Pongo abelii (Sumatran orangutan).